We begin with the raw amino-acid sequence, 455 residues long: Bifunctional protein GlmU (455 aa).

Residues 1-230 (MVNKNAIILA…FDESMGVNDR (230 aa)) are pyrophosphorylase. Residues 9 to 12 (LAAG), lysine 23, glutamine 73, 78 to 79 (GT), 101 to 103 (SGD), glycine 140, glutamate 155, asparagine 170, and asparagine 228 contribute to the UDP-N-acetyl-alpha-D-glucosamine site. Aspartate 103 contributes to the Mg(2+) binding site. Asparagine 228 contributes to the Mg(2+) binding site. Residues 231–251 (SALAKATKIMQKRINTQLMKD) are linker. The tract at residues 252–455 (GVTLVDPETA…KPGYAKKLPW (204 aa)) is N-acetyltransferase. Residues arginine 333 and lysine 351 each contribute to the UDP-N-acetyl-alpha-D-glucosamine site. Catalysis depends on histidine 363, which acts as the Proton acceptor. UDP-N-acetyl-alpha-D-glucosamine is bound by residues tyrosine 366 and asparagine 377. Residues 386 to 387 (NY), serine 405, alanine 423, and arginine 440 each bind acetyl-CoA.

The protein in the N-terminal section; belongs to the N-acetylglucosamine-1-phosphate uridyltransferase family. This sequence in the C-terminal section; belongs to the transferase hexapeptide repeat family. Homotrimer. Requires Mg(2+) as cofactor.

The protein resides in the cytoplasm. The catalysed reaction is alpha-D-glucosamine 1-phosphate + acetyl-CoA = N-acetyl-alpha-D-glucosamine 1-phosphate + CoA + H(+). It carries out the reaction N-acetyl-alpha-D-glucosamine 1-phosphate + UTP + H(+) = UDP-N-acetyl-alpha-D-glucosamine + diphosphate. Its pathway is nucleotide-sugar biosynthesis; UDP-N-acetyl-alpha-D-glucosamine biosynthesis; N-acetyl-alpha-D-glucosamine 1-phosphate from alpha-D-glucosamine 6-phosphate (route II): step 2/2. It participates in nucleotide-sugar biosynthesis; UDP-N-acetyl-alpha-D-glucosamine biosynthesis; UDP-N-acetyl-alpha-D-glucosamine from N-acetyl-alpha-D-glucosamine 1-phosphate: step 1/1. It functions in the pathway bacterial outer membrane biogenesis; LPS lipid A biosynthesis. Its function is as follows. Catalyzes the last two sequential reactions in the de novo biosynthetic pathway for UDP-N-acetylglucosamine (UDP-GlcNAc). The C-terminal domain catalyzes the transfer of acetyl group from acetyl coenzyme A to glucosamine-1-phosphate (GlcN-1-P) to produce N-acetylglucosamine-1-phosphate (GlcNAc-1-P), which is converted into UDP-GlcNAc by the transfer of uridine 5-monophosphate (from uridine 5-triphosphate), a reaction catalyzed by the N-terminal domain. In Limosilactobacillus fermentum (strain NBRC 3956 / LMG 18251) (Lactobacillus fermentum), this protein is Bifunctional protein GlmU.